The sequence spans 266 residues: tRNA pseudouridine synthase A (266 aa).

Catalysis depends on Asp-55, which acts as the Nucleophile. Tyr-110 is a binding site for substrate.

Belongs to the tRNA pseudouridine synthase TruA family.

The catalysed reaction is uridine(38/39/40) in tRNA = pseudouridine(38/39/40) in tRNA. Its function is as follows. Formation of pseudouridine at positions 38, 39 and 40 in the anticodon stem and loop of transfer RNAs. The protein is tRNA pseudouridine synthase A of Thermococcus sibiricus (strain DSM 12597 / MM 739).